A 563-amino-acid chain; its full sequence is Dihydroxy-acid dehydratase (563 aa).

D78 contributes to the Mg(2+) binding site. C119 contributes to the [2Fe-2S] cluster binding site. Residues D120 and K121 each coordinate Mg(2+). N6-carboxylysine is present on K121. A [2Fe-2S] cluster-binding site is contributed by C191. E442 contacts Mg(2+). The Proton acceptor role is filled by S468.

It belongs to the IlvD/Edd family. Homodimer. The cofactor is [2Fe-2S] cluster. Requires Mg(2+) as cofactor.

It carries out the reaction (2R)-2,3-dihydroxy-3-methylbutanoate = 3-methyl-2-oxobutanoate + H2O. The catalysed reaction is (2R,3R)-2,3-dihydroxy-3-methylpentanoate = (S)-3-methyl-2-oxopentanoate + H2O. It functions in the pathway amino-acid biosynthesis; L-isoleucine biosynthesis; L-isoleucine from 2-oxobutanoate: step 3/4. It participates in amino-acid biosynthesis; L-valine biosynthesis; L-valine from pyruvate: step 3/4. Its function is as follows. Functions in the biosynthesis of branched-chain amino acids. Catalyzes the dehydration of (2R,3R)-2,3-dihydroxy-3-methylpentanoate (2,3-dihydroxy-3-methylvalerate) into 2-oxo-3-methylpentanoate (2-oxo-3-methylvalerate) and of (2R)-2,3-dihydroxy-3-methylbutanoate (2,3-dihydroxyisovalerate) into 2-oxo-3-methylbutanoate (2-oxoisovalerate), the penultimate precursor to L-isoleucine and L-valine, respectively. This chain is Dihydroxy-acid dehydratase, found in Desulfitobacterium hafniense (strain DSM 10664 / DCB-2).